We begin with the raw amino-acid sequence, 212 residues long: Uracil phosphoribosyltransferase (212 aa).

5-phospho-alpha-D-ribose 1-diphosphate is bound by residues R78, R103, and 130 to 138 (DPMLATGGS). Uracil-binding positions include I193 and 198 to 200 (GDA). D199 serves as a coordination point for 5-phospho-alpha-D-ribose 1-diphosphate.

It belongs to the UPRTase family. Mg(2+) serves as cofactor.

The catalysed reaction is UMP + diphosphate = 5-phospho-alpha-D-ribose 1-diphosphate + uracil. It participates in pyrimidine metabolism; UMP biosynthesis via salvage pathway; UMP from uracil: step 1/1. Allosterically activated by GTP. In terms of biological role, catalyzes the conversion of uracil and 5-phospho-alpha-D-ribose 1-diphosphate (PRPP) to UMP and diphosphate. This is Uracil phosphoribosyltransferase from Ectopseudomonas mendocina (strain ymp) (Pseudomonas mendocina).